Reading from the N-terminus, the 560-residue chain is Putative transport protein VFMJ11_0927 (560 aa).

The next 5 membrane-spanning stretches (helical) occupy residues 8–28, 37–57, 66–86, 94–114, and 161–181; these read LLSQ…LFIA, LGSS…GYTF, FMLF…GIFL, LLVL…GHYF, and NLSV…ILLA. RCK C-terminal domains follow at residues 203-292 and 293-376; these read RGIG…FRNG and KEVF…KIGF. Helical transmembrane passes span 386–406, 409–429, 451–471, 478–498, and 539–559; these read LLAF…TMSF, VTFG…LGFL, GLLV…NEYF, VLAA…LVGA, and AGTY…MILL.

This sequence belongs to the AAE transporter (TC 2.A.81) family. YbjL subfamily.

The protein localises to the cell membrane. This chain is Putative transport protein VFMJ11_0927, found in Aliivibrio fischeri (strain MJ11) (Vibrio fischeri).